Reading from the N-terminus, the 353-residue chain is Histidinol-phosphate aminotransferase (353 aa).

The residue at position 211 (K211) is an N6-(pyridoxal phosphate)lysine.

The protein belongs to the class-II pyridoxal-phosphate-dependent aminotransferase family. Histidinol-phosphate aminotransferase subfamily. In terms of assembly, homodimer. The cofactor is pyridoxal 5'-phosphate.

The catalysed reaction is L-histidinol phosphate + 2-oxoglutarate = 3-(imidazol-4-yl)-2-oxopropyl phosphate + L-glutamate. Its pathway is amino-acid biosynthesis; L-histidine biosynthesis; L-histidine from 5-phospho-alpha-D-ribose 1-diphosphate: step 7/9. In Marinomonas sp. (strain MWYL1), this protein is Histidinol-phosphate aminotransferase.